We begin with the raw amino-acid sequence, 247 residues long: Adenosylcobinamide-GDP ribazoletransferase (247 aa).

5 consecutive transmembrane segments (helical) span residues 34 to 54, 59 to 79, 113 to 133, 138 to 158, and 194 to 214; these read IITF…VFMV, CGVP…TGGF, GGLA…ELAL, ILAS…LLMY, and VLLP…AIFI.

It belongs to the CobS family. It depends on Mg(2+) as a cofactor.

Its subcellular location is the cell inner membrane. It catalyses the reaction alpha-ribazole + adenosylcob(III)inamide-GDP = adenosylcob(III)alamin + GMP + H(+). The catalysed reaction is alpha-ribazole 5'-phosphate + adenosylcob(III)inamide-GDP = adenosylcob(III)alamin 5'-phosphate + GMP + H(+). The protein operates within cofactor biosynthesis; adenosylcobalamin biosynthesis; adenosylcobalamin from cob(II)yrinate a,c-diamide: step 7/7. In terms of biological role, joins adenosylcobinamide-GDP and alpha-ribazole to generate adenosylcobalamin (Ado-cobalamin). Also synthesizes adenosylcobalamin 5'-phosphate from adenosylcobinamide-GDP and alpha-ribazole 5'-phosphate. In Shigella dysenteriae serotype 1 (strain Sd197), this protein is Adenosylcobinamide-GDP ribazoletransferase.